The chain runs to 407 residues: Phosphopentomutase (407 aa).

Mn(2+) contacts are provided by D10, D306, H311, D347, H348, and H359.

The protein belongs to the phosphopentomutase family. Requires Mn(2+) as cofactor.

It localises to the cytoplasm. It carries out the reaction 2-deoxy-alpha-D-ribose 1-phosphate = 2-deoxy-D-ribose 5-phosphate. The catalysed reaction is alpha-D-ribose 1-phosphate = D-ribose 5-phosphate. Its pathway is carbohydrate degradation; 2-deoxy-D-ribose 1-phosphate degradation; D-glyceraldehyde 3-phosphate and acetaldehyde from 2-deoxy-alpha-D-ribose 1-phosphate: step 1/2. In terms of biological role, isomerase that catalyzes the conversion of deoxy-ribose 1-phosphate (dRib-1-P) and ribose 1-phosphate (Rib-1-P) to deoxy-ribose 5-phosphate (dRib-5-P) and ribose 5-phosphate (Rib-5-P), respectively. The sequence is that of Phosphopentomutase from Salmonella schwarzengrund (strain CVM19633).